Here is a 545-residue protein sequence, read N- to C-terminus: MRNGRTLLRWAGVLAATAIIGVGGFWSQGTTKALPEGPGEKRADLIEIGAMERFGKLDLPKVAFRHDQHTTAVTGMGKDCAACHKSKDGKMSLKFMRLDDNSAAELKEIYHANCIGCHTDLAKAGKKTGPQDGECRSCHNPKPSAASSWKEIGFDKSLHYRHVASKAIKPVGDPQKNCGACHHVYDEASKKLVWGKNKEDSCRACHGEKPVDKRPALDTAAHTACISCHMDVAKTKAETGPVNCAGCHAPEAQAKFKVVREVPRLDRGQPDAALILPVPGKDAPREMKGTMKPVAFDHKAHEAKANDCRTCHHVRIDTCTACHTVNGTADSKFVQLEKAMHQPDSMRSCVGCHNTRVQQPTCAGCHGFIKPTKSDAQCGVCHVAAPGFDAKQVEAGALLNLKAEQRSQVAASMLSARPQPKGTFDLNDIPEKVVIGSIAKEYQPSEFPHRKIVKTLIAGIGEDKLAATFHIEKGTLCQGCHHNSPASLTPPKCASCHGKPFDADRGDRPGLKAAYHQQCMGCHDRMKIEKPANTACVDCHKERAK.

A signal peptide spans Met1–Thr31. The heme c site is built by His66, His69, Cys80, Cys83, His84, His111, Cys114, Cys117, His118, Cys135, Cys138, His139, His159, His162, Cys178, Cys181, His182, His183, Cys202, Cys205, His206, His222, Cys225, Cys228, His229, Cys244, Cys247, His248, His298, His301, Cys308, Cys311, His312, His313, Cys319, Cys322, His323, His341, Cys349, Cys352, His353, Cys362, Cys365, His366, Cys378, Cys381, His382, His449, His470, Cys477, Cys480, His481, His482, Cys493, Cys496, His497, His516, Cys519, Cys522, His523, Cys536, Cys539, and His540.

In terms of assembly, monomer. Post-translationally, binds 16 heme c groups per subunit. High-spin heme 15 has single axial histidine ligand and the other hemes are low-spin bis-histidinyl coordinated.

It is found in the periplasm. HMWC (high-molecular-weight cytochrome c), ORF2, ORF3, ORF4, ORF5 and ORF6 in the HMC operon form a transmembrane protein complex that allows electron flow from the periplasmic hydrogenase to the cytoplasmic enzymes that catalyze reduction of sulfates. This Nitratidesulfovibrio vulgaris (strain ATCC 29579 / DSM 644 / CCUG 34227 / NCIMB 8303 / VKM B-1760 / Hildenborough) (Desulfovibrio vulgaris) protein is High-molecular-weight cytochrome c (hmcA).